We begin with the raw amino-acid sequence, 481 residues long: MMLKSITESFATAIHGLKVGHLTDRVIQRSKRMILDTLGAGFLGTTTEVFHIASQYSKIYSSNISSTVWGQPDIRLPPTYAAFVNGVAIHSMDFDDTWHPATHPSGAVLPVLTALAEALPRSPKFSGLDLLLAFNVGIEVQGRLLHFAKEANDMPKRFHPPSVVGTLGSAAAASKFLGLSSTKCREALAIAVSHAGAPMANAATQTKPLHIGNAAKHGIEAAFLAMLGLQGNKQVLDLEAGFGAFYANYSPKVLPSIASYSWLLDQQDVAFKRFPAHLSTHWVADAAASVRKHLVAERALLPTDYIKRIVLRIPNVQYVNRPFPVSEHEARHSFQYVACAMLLDGGITVPSFHECQINRPQVRELLSKVELEYPPDNLPSFNILYCEISVTLKDGATFTDRSDTFYGHWRKPLSQEDLEEKFRANASKMLSWDTVESLIKIVKNLEDLEDCSVLTTLLKGPSPPEVASNSPACNNSITNLS.

The disordered stretch occupies residues 462 to 481 (SPPEVASNSPACNNSITNLS). Residues 467 to 481 (ASNSPACNNSITNLS) are compositionally biased toward polar residues.

Belongs to the PrpD family. As to quaternary structure, homodimer. As to expression, expressed in LPS-tolerized macrophages (at protein level). Expressed in peripheral blood mononuclear cells (PBMCs), microglia and macrophage cells.

It is found in the mitochondrion. The enzyme catalyses cis-aconitate + H(+) = itaconate + CO2. Functionally, cis-aconitate decarboxylase that catalyzes production of itaconate and is involved in the inhibition of the inflammatory response. Acts as a negative regulator of the Toll-like receptors (TLRs)-mediated inflammatory innate response by stimulating the tumor necrosis factor alpha-induced protein TNFAIP3 expression via reactive oxygen species (ROS) in LPS-tolerized macrophages. Involved in antimicrobial response of innate immune cells; ACOD1-mediated itaconic acid production contributes to the antimicrobial activity of macrophages by generating itaconate, leading to alkylation of proteins, such as TFEB. Involved in antiviral response following infection by flavivirus in neurons: ACOD1-mediated itaconate production inhibits the activity of succinate dehydrogenase, generating a metabolic state in neurons that suppresses replication of viral genomes. Plays a role in the embryo implantation. This is Cis-aconitate decarboxylase from Homo sapiens (Human).